We begin with the raw amino-acid sequence, 346 residues long: KH domain-containing, RNA-binding, signal transduction-associated protein 3 (346 aa).

The tract at residues 1–160 (MEEKYLPELM…IKKFLIPDYN (160 aa)) is involved in homodimerization. A Glycyl lysine isopeptide (Lys-Gly) (interchain with G-Cter in SUMO2) cross-link involves residue K4. Residues 61 to 127 (LIPVKQFPKF…AKYFHLNDDL (67 aa)) enclose the KH domain. Disordered stretches follow at residues 212 to 266 (RPVA…QETY) and 317 to 346 (GQEE…YGRY). Over residues 253 to 262 (GYRPPPPPPT) the composition is skewed to pro residues.

Belongs to the KHDRBS family. As to quaternary structure, self-associates to form homooligomers; dimerization increases RNA affinity. Interacts with KHDRBS2/SLM-1. Interacts with KHDRBS1/SAM68; heterooligomer formation of KHDRBS family proteins may modulate RNA substrate specificity. Interacts with the splicing regulatory proteins SFRS9, SAFB and YTHDC1. Interacts with HNRPL, RBMX, p85 subunit of PI3-kinase, SERPINB5. In terms of processing, phosphorylated on tyrosine residues by PTK6. In terms of tissue distribution, highly expressed in testis and brain. In adult cerebellum expressed predominantly in internal granular layer interneurons and in hippocampus is exclusively expressed in CA neurons; expression is restricted to neuronal subpopulations largely non-overlapping with expression of KHDRBS2/SLM-1.

The protein localises to the nucleus. Functionally, RNA-binding protein that plays a role in the regulation of alternative splicing and influences mRNA splice site selection and exon inclusion. Binds preferentially to the 5'-[AU]UAAA-3' motif in vitro. Binds optimally to RNA containing 5'-[AU]UAA-3' as a bipartite motif spaced by more than 15 nucleotides. Binds poly(A). RNA-binding abilities are down-regulated by tyrosine kinase PTK6. Involved in splice site selection of vascular endothelial growth factor. In vitro regulates CD44 alternative splicing by direct binding to purine-rich exonic enhancer. Can regulate alternative splicing of neurexins NRXN1-3 in the laminin G-like domain 6 containing the evolutionary conserved neurexin alternative spliced segment 4 (AS4) involved in neurexin selective targeting to postsynaptic partners such as neuroligins and LRRTM family members. High concentrations in forebrain structures block splicing inclusion of NRXN1-3 AS4 exons while low concentrations favor their inclusion. Targeted, cell-type specific splicing regulation of NRXN1 at AS4 is involved in neuronal glutamatergic synapse function and plasticity and is linked to behavioral aspects. Regulates expression of KHDRBS2/SLIM-1 in defined neuron populations in the hippocampus by modifying its alternative splicing resulting in a transcript predicted to undergo nonsense-mediated decay. Can bind FABP9 mRNA. May play a role as a negative regulator of cell growth. Inhibits cell proliferation. The sequence is that of KH domain-containing, RNA-binding, signal transduction-associated protein 3 (Khdrbs3) from Mus musculus (Mouse).